The following is a 342-amino-acid chain: Autoinducer 2 import system permease protein LsrC (342 aa).

The Periplasmic portion of the chain corresponds to 1–13 (MLKFIQNNREITA). Residues 14-34 (LLAVVLLFVLPGFLDRQYLSV) traverse the membrane as a helical segment. At 35-38 (QTLT) the chain is on the cytoplasmic side. The chain crosses the membrane as a helical span at residues 39-59 (MVYSSAQILILLAMGATLVML). Residues 60–69 (TRNIDVSVGS) lie on the Periplasmic side of the membrane. The helical transmembrane segment at 70-90 (ITGMCAVLLGMLLNAGYSLPV) threads the bilayer. Residues 91 to 92 (AC) lie on the Cytoplasmic side of the membrane. The chain crosses the membrane as a helical span at residues 93 to 113 (VATLLLGLLAGFFNGVLVAWL). Residue Lys114 is a topological domain, periplasmic. The chain crosses the membrane as a helical span at residues 115-135 (IPAIVATLGTLGLYRGIMLLW). Residues 136 to 154 (TGGKWIEGLPAELKQLSAP) lie on the Cytoplasmic side of the membrane. Residues 155–175 (LLLGVSAIGWLTIILVAFMAW) traverse the membrane as a helical segment. Residues 176–212 (LLAKTAFGRSFYATGDNLQGARQLGVRTEAIRIVAFS) lie on the Periplasmic side of the membrane. The helical transmembrane segment at 213–233 (LNGCMAALAGIVFASQIGFIP) threads the bilayer. At 234 to 251 (NQTGTGLEMKAIAACVLG) the chain is on the cytoplasmic side. The helical transmembrane segment at 252–272 (GISLLGGSGAIIGAVLGAWFL) threads the bilayer. The Periplasmic segment spans residues 273 to 283 (TQIDSVLVLLR). Residues 284–304 (IPAWWNDFIAGLVLLAVLVFD) form a helical membrane-spanning segment. Residues 305 to 342 (GRLRCALERNLRRQKYARFMTPPPSVKPASSGKKREAA) lie on the Cytoplasmic side of the membrane.

The protein belongs to the binding-protein-dependent transport system permease family. AraH/RbsC subfamily. The complex is composed of two ATP-binding proteins (LsrA), two transmembrane proteins (LsrC and LsrD) and a solute-binding protein (LsrB).

Its subcellular location is the cell inner membrane. Functionally, part of the ABC transporter complex LsrABCD involved in autoinducer 2 (AI-2) import. Probably responsible for the translocation of the substrate across the membrane. In Escherichia coli (strain K12 / DH10B), this protein is Autoinducer 2 import system permease protein LsrC (lsrC).